A 917-amino-acid polypeptide reads, in one-letter code: Nitrate reductase [NADH] 1 (917 aa).

The disordered stretch occupies residues 62–81; that stretch reads DSYDDSSSDDEDESHNRNVP. The segment covering 63–74 has biased composition (acidic residues); the sequence is SYDDSSSDDEDE. Cys197 is a Mo-molybdopterin binding site. The region spanning 545–620 is the Cytochrome b5 heme-binding domain; the sequence is SKMYSISEVR…LEDYRIGELI (76 aa). His580 and His603 together coordinate heme. The FAD-binding FR-type domain maps to 660-772; that stretch reads REKIPVRLIE…KGPLGHIEYK (113 aa). FAD is bound by residues 712–715, 729–733, Phe734, Phe741, 746–748, and Thr799; these read RAYT, VVKVY, and LMS.

Belongs to the nitrate reductase family. As to quaternary structure, homodimer. FAD is required as a cofactor. Heme serves as cofactor. It depends on Mo-molybdopterin as a cofactor. Root, leaf, and shoot.

The catalysed reaction is nitrite + NAD(+) + H2O = nitrate + NADH + H(+). Its function is as follows. Nitrate reductase is a key enzyme involved in the first step of nitrate assimilation in plants, fungi and bacteria. The chain is Nitrate reductase [NADH] 1 (NIA1) from Arabidopsis thaliana (Mouse-ear cress).